The following is a 132-amino-acid chain: Thioredoxin H4-2 (132 aa).

Residues 18 to 130 (DFKGGNVHVI…LEKKVQALAD (113 aa)) form the Thioredoxin domain. Residues C56 and C59 each act as nucleophile in the active site. C56 and C59 form a disulfide bridge.

The protein belongs to the thioredoxin family. Plant H-type subfamily.

It localises to the cytoplasm. Its function is as follows. Probable thiol-disulfide oxidoreductase that may be involved in the redox regulation of a number of cytosolic enzymes. This chain is Thioredoxin H4-2, found in Oryza sativa subsp. japonica (Rice).